The following is a 245-amino-acid chain: Probable phosphatase KPN78578_10290 (245 aa).

The Zn(2+) site is built by H7, H9, H15, H40, E73, H101, H131, D192, and H194.

This sequence belongs to the PHP family. In terms of assembly, homotrimer. It depends on Zn(2+) as a cofactor.

This Klebsiella pneumoniae subsp. pneumoniae (strain ATCC 700721 / MGH 78578) protein is Probable phosphatase KPN78578_10290.